We begin with the raw amino-acid sequence, 600 residues long: Zinc finger and BTB domain-containing protein 46 (600 aa).

A BTB domain is found at 31-99 (CDACVVVEGK…MYSAHLALTS (69 aa)). The tract at residues 173 to 222 (RRTSPANSSGDSAIASCHEGGSSYGKEDQEPKADGPDDVSSQSLWPGDVG) is disordered. Over residues 197-207 (GKEDQEPKADG) the composition is skewed to basic and acidic residues. Lysine 229 is covalently cross-linked (Glycyl lysine isopeptide (Lys-Gly) (interchain with G-Cter in SUMO2)). Serine 234 bears the Phosphoserine mark. The segment at 235 to 278 (PSHYGGSELPSSKDTAIQNSLSEQGSGDGWQPTGRRKNRKNKET) is disordered. Polar residues predominate over residues 243–259 (LPSSKDTAIQNSLSEQG). 2 consecutive C2H2-type zinc fingers follow at residues 418–436 (FKCPYCSFSAMHQCILKRH) and 446–468 (YPCEICGKKFTRREHMKRHTLVH). The tract at residues 513-600 (LDHGGGGEGS…EPDKDFAWIS (88 aa)) is disordered. Over residues 533-555 (YLEDPDDPRGEAEEELVEDEDED) the composition is skewed to acidic residues. Composition is skewed to basic and acidic residues over residues 556–574 (VAKWKDDVGLAHEDALLGD) and 591–600 (EPDKDFAWIS).

Post-translationally, sumoylated. Desumoylation by DESI1 reverses transcriptional repression activity.

The protein localises to the nucleus. Its function is as follows. Functions as a transcriptional repressor for PRDM1. The sequence is that of Zinc finger and BTB domain-containing protein 46 (Zbtb46) from Mus musculus (Mouse).